The sequence spans 209 residues: Casparian strip membrane protein 1 (209 aa).

Residues 1 to 46 (MSSGANATTIDVPETRAEAKGKAPLIAAPIVATTKATPHPNAGWKK) lie on the Cytoplasmic side of the membrane. Residues 47–67 (GLAIFDFLLRLAAIAATLAAA) form a helical membrane-spanning segment. The Extracellular portion of the chain corresponds to 68-95 (TTMGTTDETLPFFTQFFQFQASFDDLPA). The chain crosses the membrane as a helical span at residues 96-116 (FMFFVVATAIASGYLALSLPF). Residues 117–137 (SLVSIFRPHAQGIRLLLIISD) lie on the Cytoplasmic side of the membrane. Residues 138–158 (TVMLALTTAGAASATAIVYLA) form a helical membrane-spanning segment. At 159–183 (HNGDSSANWIAICQQFTDFCQSVSG) the chain is on the extracellular side. The helical transmembrane segment at 184–204 (AVVASFIAVVIFMLLVMMSAL) threads the bilayer. Over 205–209 (ALRKH) the chain is Cytoplasmic.

Belongs to the Casparian strip membrane proteins (CASP) family. As to quaternary structure, homodimer and heterodimers.

It localises to the cell membrane. Its function is as follows. Regulates membrane-cell wall junctions and localized cell wall deposition. Required for establishment of the Casparian strip membrane domain (CSD) and the subsequent formation of Casparian strips, a cell wall modification of the root endodermis that determines an apoplastic barrier between the intraorganismal apoplasm and the extraorganismal apoplasm and prevents lateral diffusion. In Vitis vinifera (Grape), this protein is Casparian strip membrane protein 1.